We begin with the raw amino-acid sequence, 79 residues long: UPF0180 protein BCB4264_A1446 (79 aa).

This sequence belongs to the UPF0180 family.

This Bacillus cereus (strain B4264) protein is UPF0180 protein BCB4264_A1446.